Reading from the N-terminus, the 82-residue chain is UPF0291 protein LJ_1507 (82 aa).

Residues 61-82 form a disordered region; sequence DGKEVTSEKAKEAQRRKGLRKD.

This sequence belongs to the UPF0291 family.

The protein localises to the cytoplasm. In Lactobacillus johnsonii (strain CNCM I-12250 / La1 / NCC 533), this protein is UPF0291 protein LJ_1507.